A 530-amino-acid chain; its full sequence is Probable flavin-containing monooxygenase 1 (530 aa).

FAD is bound by residues 17-21 (GAGVS), Glu-38, 46-47 (VW), and 58-59 (QS). 219–222 (SAID) lines the NADP(+) pocket.

The protein belongs to the FMO family. Requires FAD as cofactor.

Its function is as follows. Required for the establishment of systemic acquired resistance (SAR). Not involved in local defense mechanisms. Confers a salicylic acid-dependent (SA) resistance to virulent pathogens such as P.syringae pv tomato and H.parasitica. The polypeptide is Probable flavin-containing monooxygenase 1 (FMO1) (Arabidopsis thaliana (Mouse-ear cress)).